The primary structure comprises 173 residues: Protein SUGARY ENHANCER 1 (173 aa).

Residues 1–31 form a disordered region; sequence MIRPAPWVGAGHRGRGGEAGACTESLGSESG.

This sequence belongs to the fantastic four family.

Involved in starch metabolism in endosperm. Acts as a modifier of SUGARY1 (SU1), an isoamylase starch-debranching enzyme involved in amylopectin biosynthesis in endosperm. The chain is Protein SUGARY ENHANCER 1 from Zea mays (Maize).